The primary structure comprises 154 residues: Crossover junction endodeoxyribonuclease RuvC (154 aa).

Catalysis depends on residues D7, E67, and D139. The Mg(2+) site is built by D7, E67, and D139.

It belongs to the RuvC family. Homodimer which binds Holliday junction (HJ) DNA. The HJ becomes 2-fold symmetrical on binding to RuvC with unstacked arms; it has a different conformation from HJ DNA in complex with RuvA. In the full resolvosome a probable DNA-RuvA(4)-RuvB(12)-RuvC(2) complex forms which resolves the HJ. Mg(2+) is required as a cofactor.

The protein resides in the cytoplasm. The enzyme catalyses Endonucleolytic cleavage at a junction such as a reciprocal single-stranded crossover between two homologous DNA duplexes (Holliday junction).. Functionally, the RuvA-RuvB-RuvC complex processes Holliday junction (HJ) DNA during genetic recombination and DNA repair. Endonuclease that resolves HJ intermediates. Cleaves cruciform DNA by making single-stranded nicks across the HJ at symmetrical positions within the homologous arms, yielding a 5'-phosphate and a 3'-hydroxyl group; requires a central core of homology in the junction. The consensus cleavage sequence is 5'-(A/T)TT(C/G)-3'. Cleavage occurs on the 3'-side of the TT dinucleotide at the point of strand exchange. HJ branch migration catalyzed by RuvA-RuvB allows RuvC to scan DNA until it finds its consensus sequence, where it cleaves and resolves the cruciform DNA. This Parasynechococcus marenigrum (strain WH8102) protein is Crossover junction endodeoxyribonuclease RuvC.